A 129-amino-acid polypeptide reads, in one-letter code: MAKEATRIRRRERKNIVSGVAHVNASFNNTMITITDAQGNTISWSSAGAMGFKGSRKSTPYAAQVAAEDAGRKAAEHGMRTLEVEVSGPGSGRESALRALQAAGFTVTSIRDVTPIPHNGCRPRKRRRV.

It belongs to the universal ribosomal protein uS11 family. Part of the 30S ribosomal subunit. Interacts with proteins S7 and S18. Binds to IF-3.

Its function is as follows. Located on the platform of the 30S subunit, it bridges several disparate RNA helices of the 16S rRNA. Forms part of the Shine-Dalgarno cleft in the 70S ribosome. In Methylobacterium sp. (strain 4-46), this protein is Small ribosomal subunit protein uS11.